A 125-amino-acid chain; its full sequence is Succinate dehydrogenase assembly factor 3, mitochondrial (125 aa).

A mitochondrion-targeting transit peptide spans 1 to 30 (MTGRHVSRVRSLYRRILQLHRALPPDLKAL).

The protein belongs to the complex I LYR family. SDHAF3 subfamily. As to quaternary structure, interacts with Sdhb within an Sdha-Sdhb subcomplex.

The protein localises to the mitochondrion matrix. Plays an essential role in the assembly of succinate dehydrogenase (SDH), an enzyme complex (also referred to as respiratory complex II) that is a component of both the tricarboxylic acid (TCA) cycle and the mitochondrial electron transport chain, and which couples the oxidation of succinate to fumarate with the reduction of ubiquinone (coenzyme Q) to ubiquinol. Promotes maturation of the iron-sulfur protein subunit Sdhb of the SDH catalytic dimer, protecting it from the deleterious effects of oxidants. May act together with SDHAF1. In Rattus norvegicus (Rat), this protein is Succinate dehydrogenase assembly factor 3, mitochondrial.